Reading from the N-terminus, the 248-residue chain is E3 ubiquitin-protein ligase BIG BROTHER (248 aa).

The RING-type; atypical zinc-finger motif lies at 197 to 238 (CVICQLKYKIGERQMNLPCKHVYHSECISKWLSINKVCPVCN).

As to quaternary structure, interacts with the E2 ubiquitin conjugating enzyme UBC10 via the RING domain. Interacts with DA1. In terms of processing, auto-ubiquitinated. As to expression, mostly expressed in inflorescence, and, to a lower extent, in seedlings, roots, stems, leaves and siliques.

It carries out the reaction S-ubiquitinyl-[E2 ubiquitin-conjugating enzyme]-L-cysteine + [acceptor protein]-L-lysine = [E2 ubiquitin-conjugating enzyme]-L-cysteine + N(6)-ubiquitinyl-[acceptor protein]-L-lysine.. The protein operates within protein modification; protein ubiquitination. In terms of biological role, E3 ubiquitin-protein ligase that limits organ size, and possibly seed size, in a dose-dependent manner. Negatively regulates the duration of cell proliferation in leaves and petals independently of the major phytohormones (e.g. auxin, cytokinin, gibberellin, brassinosteroids, ethylene, abscisic acid, jasmonic acid), probably by targeting growth stimulators for degradation. Limits the proliferation of root meristematic cells. Polyubiquitinates DA1. Involved in the promotion of leaf senescence, in addition to its function in restricting plant growth. Possesses E3 ubiquitin-protein ligase activity in vitro. This chain is E3 ubiquitin-protein ligase BIG BROTHER (BB), found in Arabidopsis thaliana (Mouse-ear cress).